Consider the following 89-residue polypeptide: Small ribosomal subunit protein uS15 (89 aa).

The span at 1-21 (MSLHQERKSELVSKFRTHESD) shows a compositional bias: basic and acidic residues. The interval 1–25 (MSLHQERKSELVSKFRTHESDTGSP) is disordered.

Belongs to the universal ribosomal protein uS15 family. Part of the 30S ribosomal subunit. Forms a bridge to the 50S subunit in the 70S ribosome, contacting the 23S rRNA.

One of the primary rRNA binding proteins, it binds directly to 16S rRNA where it helps nucleate assembly of the platform of the 30S subunit by binding and bridging several RNA helices of the 16S rRNA. Its function is as follows. Forms an intersubunit bridge (bridge B4) with the 23S rRNA of the 50S subunit in the ribosome. In Myxococcus xanthus (strain DK1622), this protein is Small ribosomal subunit protein uS15.